A 1247-amino-acid chain; its full sequence is MTLGSETKTDVEVPIINGKHEIPQEENDSGHSSINTPDSSEPDKQVDKFVKITIQPSCGDAFELHLSDNELVQELYQTLLDREATCHRTCFSLYLNGTAVDNYSEVRAIPGFVDGCTLNVVDEPYTIRDARLHLRQVRELLKFGLTEDQHEPPCTNDAQSYLTTINLQPEEKKEPKPSDILPPDHALPGCKERSLAHLLVPQPKELIALKDIAFSPYNPPPGPRKLRGDVLYIDITTVENRIYHVTCCTRGFYVNNSQDGRFDPTVSNSNKTVYQSVIELLQNVSPGFKKVYPQILKRRQEKTLVERLPTSYPVSSWVGNPLKTDGYMSDSLRAIELTEPFRVGFEDHMPGLLRDWNEELQTTFEMTRKSISERVIRDRSYYKIHADYVNAAARGVQSILDGNILAINPGEDKKTHMYIWNNIFFSLGFDVRDHYKELGGDAAAFAATSTDLQGVRAFATLDDPKLNTLGMAIFDYRGYRVTAQSIIPGILEREQEQSVVYGSIDFGKTVVSDEKYHELLEDAAHKLKMLPHTVISEKDGVKEELKLYTSYEAKGIIGNDGRKYVLDLLRSMPPDVHYLDDAEVSEAAKTLGYPRKFPHKLSALRRELIDAFCESRLVTFIQLTAKKIRDLITESKEKNDETLIKQAAEAETELSLLFMAISEDKEFEAKNKVVQDAIKEACAVVHSIYEDRYVMKFNPDCFSSNVKHAPTENLERQRRVVVDAADFLLTQKIPELVQNLKDCVVQPIDGDNLADIMHINGINIRYLGEIGKRLENSVSFARPLVLSDIVARSAKHVIRKINVQITADQLSASTSHILNCLFSVVLDPSPIAANVAKKANKKNGKKRVTSAWSSLTTSALWNSIREDSASYYGYPIEADSLEKFTELHDIQKTALFRRICKVMGVQLVARDYQLDNSTAKKTSIFVEDDIINFFPIIKHHEPFTADAKKMFIRGQQAMSIGASREAYECIGESLNLMTLVYGVMHPDMPQCLRALARLSHVLGETGDALNNQHKAAVMSERLIGLDAGNTIIEYINLAHFAFGALLIPGSLRPLYRARYLMNLVFGEKHPVMAQIDANIGLILFTVQEFDTALKYLQSADAITKTIGEPRKLKTGLISNLIARTHAARGDFRAALVAEKETFAIYSELYGPNHPRVNESSEYLRTLTQQAVTFQKKMLKLDNSTNITELFQAQPPTVTSLFDTLNIINGILIIGVPGLSSLGKQQNGTTEESKTTDVAAQLDNETLD.

The disordered stretch occupies residues 1-43 (MTLGSETKTDVEVPIINGKHEIPQEENDSGHSSINTPDSSEPD). A compositionally biased stretch (polar residues) spans 30-39 (GHSSINTPDS). The Clu domain occupies 329-579 (SDSLRAIELT…RSMPPDVHYL (251 aa)). The interval 1222–1247 (GKQQNGTTEESKTTDVAAQLDNETLD) is disordered.

It belongs to the CLU family.

Its subcellular location is the cytoplasm. Its function is as follows. mRNA-binding protein involved in proper cytoplasmic distribution of mitochondria. The sequence is that of Clustered mitochondria protein homolog from Caenorhabditis elegans.